A 295-amino-acid chain; its full sequence is MEALTTSRVVPVQVPCRKLSSLFANFSCLELRRYPCRGLVSIMNHPKLLRPVTASVQPHELSTLGHEGNIVPSKEILDLWRSVEAVCFDVDSTVCVDEGIDELAEFCGAGKAVAEWTARAMGGSVPFEEALAARLSLFKPSLSKVEEYLDKRPPRLSPGIEELVKKLRANNIDVYLISGGFRQMINPVASILGIPRENIFANNLLFGNSGEFLGFDENEPTSRSGGKAKAVQQIRKGRLYKTMAMIGDGATDLEARKPGGADLFICYAGVQLREAVAANADWLIFKFESLINSLD.

A chloroplast-targeting transit peptide spans 1–54; that stretch reads MEALTTSRVVPVQVPCRKLSSLFANFSCLELRRYPCRGLVSIMNHPKLLRPVTA. Catalysis depends on Asp89, which acts as the Nucleophile. Mg(2+)-binding residues include Asp89 and Asp91. Asp91 functions as the Proton donor in the catalytic mechanism. Substrate contacts are provided by residues Glu98, Arg134, 178–179, and Lys227; that span reads SG. Asp248 contacts Mg(2+).

It belongs to the HAD-like hydrolase superfamily. SerB family. Mg(2+) serves as cofactor. As to expression, ubiquitous. Mainly expressed in shoot and root meristems, vasculature, pollen, anthers, carpels and seeds.

The protein resides in the plastid. Its subcellular location is the chloroplast. It catalyses the reaction O-phospho-L-serine + H2O = L-serine + phosphate. It carries out the reaction O-phospho-D-serine + H2O = D-serine + phosphate. The protein operates within amino-acid biosynthesis; L-serine biosynthesis; L-serine from 3-phospho-D-glycerate: step 3/3. With respect to regulation, approximately 60% inhibition of PSP activity is observed in presence of 10 mM serine. Functionally, catalyzes the last step in the plastidial phosphorylated pathway of serine biosynthesis (PPSB). The reaction mechanism proceeds via the formation of a phosphoryl-enzyme intermediates. Required for embryo, pollen and root development. May be required preferentially for serine biosynthesis in non-photosynthetic tissues. This chain is Phosphoserine phosphatase, chloroplastic (PSP), found in Arabidopsis thaliana (Mouse-ear cress).